The following is a 746-amino-acid chain: MERTYQYAWIIPFLTLAVPILIGLGLLLVPPATKSIRRIWAFPSVLLLSIVMVFSTNLSIQQINGNSIYQYLWSWTINSDSSLEFGYLIDSLTSIMSILIATVGMMVLIYSDNYMSHDKGYLRFFAYMSFFNTSMLGLVISPNLIQIYIFWELVGMCSYLSIGFWFTRPSAANACQKAFVTNRVGDFGLLLGILGLYWIAGSFEFRDLFDIFNDSIDNIDNNVLNSSFAILCASLLFLGAVAKSAQFPLHVWLPDAMEGPTPISALIHAATMVAAGIFLVARLLPLLTVIPYIMNLISLIGVITVLLGATLALAQKDIKRSLAYSTMSQLGYIMLASGIGSYRAALFHSITHAYSKALLFLGSGSIIHSMEPILGYSPDKSQNMVFMGGLSKYVPITKATFLLGTLSLCGIPPLACFWSKDEILNNSWLYSPIFAIIASSTTGLTAFYMFRMYLLTFEGHLRVHFKGDTNSSLYSISIWGKEGPEVFSRNLILLSMNNNQNEKVSSFLNKNKIYQIDRDVIKMRSFSTHFVKKETFPYPHESDNTMLFPLLLLAILTLFVGSVGIRFGQGVTDFDVLSKWLIPSISMDLFHEYLNPSADWYEFAQNAIYSVSIAFFGILIANLLYGSVHSSFQNLDLINSFAKIYTKIRIFSDQALNVIYNWSYNRGYIDLYYATILTRGIRGLAESTHFFDQRIIDGVTNAVGITNFFVGEAIKYMAGGRISSYLFFSLSSLSIALILVYFYLYF.

16 helical membrane-spanning segments follow: residues 9 to 29 (WIIP…LLLV), 39 to 59 (IWAF…TNLS), 89 to 109 (IDSL…MVLI), 125 to 145 (FAYM…PNLI), 147 to 167 (IYIF…FWFT), 185 to 205 (GDFG…SFEF), 222 to 242 (NVLN…GAVA), 261 to 281 (TPIS…FLVA), 283 to 303 (LLPL…IGVI), 330 to 350 (LGYI…FHSI), 357 to 377 (ALLF…LGYS), 399 to 419 (ATFL…CFWS), 428 to 448 (WLYS…TAFY), 545 to 565 (TMLF…SVGI), 608 to 628 (IYSV…YGSV), and 726 to 746 (LFFS…YLYF).

This sequence belongs to the complex I subunit 5 family. NDH is composed of at least 16 different subunits, 5 of which are encoded in the nucleus.

It is found in the plastid. It localises to the chloroplast thylakoid membrane. It carries out the reaction a plastoquinone + NADH + (n+1) H(+)(in) = a plastoquinol + NAD(+) + n H(+)(out). It catalyses the reaction a plastoquinone + NADPH + (n+1) H(+)(in) = a plastoquinol + NADP(+) + n H(+)(out). Its function is as follows. NDH shuttles electrons from NAD(P)H:plastoquinone, via FMN and iron-sulfur (Fe-S) centers, to quinones in the photosynthetic chain and possibly in a chloroplast respiratory chain. The immediate electron acceptor for the enzyme in this species is believed to be plastoquinone. Couples the redox reaction to proton translocation, and thus conserves the redox energy in a proton gradient. This is NAD(P)H-quinone oxidoreductase subunit 5, chloroplastic (ndhF) from Amborella trichopoda.